The following is a 287-amino-acid chain: ATP synthase gamma chain (287 aa).

It belongs to the ATPase gamma chain family. As to quaternary structure, F-type ATPases have 2 components, CF(1) - the catalytic core - and CF(0) - the membrane proton channel. CF(1) has five subunits: alpha(3), beta(3), gamma(1), delta(1), epsilon(1). CF(0) has three main subunits: a, b and c.

The protein resides in the cell inner membrane. In terms of biological role, produces ATP from ADP in the presence of a proton gradient across the membrane. The gamma chain is believed to be important in regulating ATPase activity and the flow of protons through the CF(0) complex. This Hahella chejuensis (strain KCTC 2396) protein is ATP synthase gamma chain.